The following is a 483-amino-acid chain: Acyl-coenzyme A thioesterase 2, mitochondrial (483 aa).

Residue K104 is modified to N6-acetyllysine. Active-site charge relay system residues include S294, D388, and H422. At K470 the chain carries N6-succinyllysine. The Microbody targeting signal signature appears at 481–483; it reads SKV.

The protein belongs to the C/M/P thioester hydrolase family. In terms of assembly, monomer. As to expression, strongest expression in heart, liver, muscle and kidney. Weak in placenta and pancreas.

It localises to the mitochondrion. It carries out the reaction hexadecanoyl-CoA + H2O = hexadecanoate + CoA + H(+). It catalyses the reaction tetradecanoyl-CoA + H2O = tetradecanoate + CoA + H(+). The enzyme catalyses octadecanoyl-CoA + H2O = octadecanoate + CoA + H(+). The catalysed reaction is eicosanoyl-CoA + H2O = eicosanoate + CoA + H(+). It carries out the reaction decanoyl-CoA + H2O = decanoate + CoA + H(+). It catalyses the reaction dodecanoyl-CoA + H2O = dodecanoate + CoA + H(+). The enzyme catalyses (9Z)-octadecenoyl-CoA + H2O = (9Z)-octadecenoate + CoA + H(+). The catalysed reaction is (9Z)-hexadecenoyl-CoA + H2O = (9Z)-hexadecenoate + CoA + H(+). It carries out the reaction (9E)-octadecenoyl-CoA + H2O = (9E)-octadecenoate + CoA + H(+). It catalyses the reaction (9Z,12Z)-octadecadienoyl-CoA + H2O = (9Z,12Z)-octadecadienoate + CoA + H(+). Its pathway is lipid metabolism; fatty acid metabolism. Functionally, catalyzes the hydrolysis of acyl-CoAs into free fatty acids and coenzyme A (CoASH), regulating their respective intracellular levels. Displays higher activity toward long chain acyl CoAs (C14-C20). The enzyme is involved in enhancing the hepatic fatty acid oxidation in mitochondria. This chain is Acyl-coenzyme A thioesterase 2, mitochondrial (ACOT2), found in Homo sapiens (Human).